A 511-amino-acid polypeptide reads, in one-letter code: 2,3-bisphosphoglycerate-independent phosphoglycerate mutase (511 aa).

Mn(2+) contacts are provided by Asp14 and Ser64. Ser64 acts as the Phosphoserine intermediate in catalysis. Substrate contacts are provided by residues His125, 155 to 156 (RD), Arg187, Arg193, 259 to 262 (RADR), and Lys333. Residues Asp400, His404, Asp441, His442, and His460 each contribute to the Mn(2+) site.

This sequence belongs to the BPG-independent phosphoglycerate mutase family. Monomer. It depends on Mn(2+) as a cofactor.

It carries out the reaction (2R)-2-phosphoglycerate = (2R)-3-phosphoglycerate. It functions in the pathway carbohydrate degradation; glycolysis; pyruvate from D-glyceraldehyde 3-phosphate: step 3/5. Its function is as follows. Catalyzes the interconversion of 2-phosphoglycerate and 3-phosphoglycerate. In Pseudomonas entomophila (strain L48), this protein is 2,3-bisphosphoglycerate-independent phosphoglycerate mutase.